The chain runs to 907 residues: Anaphase-promoting complex subunit 2 (907 aa).

Disordered regions lie at residues 203 to 228 and 790 to 838; these read NNSK…EEES and NKEK…AKEK. Acidic residues-rich tracts occupy residues 214–226 and 804–830; these read QQEE…ENEE and ENDD…EEEE.

It belongs to the cullin family. The APC/C is composed of at least 13 subunits that stay tightly associated throughout the cell cycle: anapc1, anapc2, anapc3, anapc4, anapc5, anapc6, anapc7, anapc8, anapc10, anapc11, cdc20, cdc26 and cdh1.

It is found in the nucleus. Its pathway is protein modification; protein ubiquitination. Component of the anaphase promoting complex/cyclosome (APC/C), a cell cycle-regulated E3 ubiquitin-protein ligase complex that controls progression through mitosis and the G1 phase of the cell cycle. The sequence is that of Anaphase-promoting complex subunit 2 (anapc2) from Dictyostelium discoideum (Social amoeba).